Here is a 509-residue protein sequence, read N- to C-terminus: Photosystem II CP47 reaction center protein (509 aa).

Transmembrane regions (helical) follow at residues 21–36 (AVHM…WAGS), 101–115 (IVFS…IWHW), 140–156 (GIHL…FGAF), 203–218 (IAAG…FHLS), 237–253 (VLSS…AFVV), and 458–473 (SFAL…HGSR).

It belongs to the PsbB/PsbC family. PsbB subfamily. As to quaternary structure, PSII is composed of 1 copy each of membrane proteins PsbA, PsbB, PsbC, PsbD, PsbE, PsbF, PsbH, PsbI, PsbJ, PsbK, PsbL, PsbM, PsbT, PsbX, PsbY, PsbZ, Psb30/Ycf12, at least 3 peripheral proteins of the oxygen-evolving complex and a large number of cofactors. It forms dimeric complexes. Binds multiple chlorophylls. PSII binds additional chlorophylls, carotenoids and specific lipids. is required as a cofactor.

Its subcellular location is the plastid. The protein resides in the chloroplast thylakoid membrane. In terms of biological role, one of the components of the core complex of photosystem II (PSII). It binds chlorophyll and helps catalyze the primary light-induced photochemical processes of PSII. PSII is a light-driven water:plastoquinone oxidoreductase, using light energy to abstract electrons from H(2)O, generating O(2) and a proton gradient subsequently used for ATP formation. The sequence is that of Photosystem II CP47 reaction center protein from Populus deltoides (Eastern poplar).